A 486-amino-acid chain; its full sequence is Stretch-activated cation channel yam8 (486 aa).

Residues 1–24 (MFFFSTHLILKILFFWSITRNIFG) form the signal peptide. Residues 25–464 (ATYTSLLLNN…PGVEFYESGS (440 aa)) lie on the Extracellular side of the membrane. N-linked (GlcNAc...) asparagine glycans are attached at residues Asn-33, Asn-49, Asn-59, Asn-82, and Asn-93. A helical membrane pass occupies residues 465 to 485 (ALLNISWRTFFISLIFWILFV). Residue Glu-486 is a topological domain, cytoplasmic.

It is found in the cell membrane. In terms of biological role, calcium-permeable, cation-selective stretch-activated channel (SAC) that functions together with CCH1 to mediate calcium entry into cells. Required during mating. This is Stretch-activated cation channel yam8 from Schizosaccharomyces pombe (strain 972 / ATCC 24843) (Fission yeast).